The following is a 153-amino-acid chain: Aspartate carbamoyltransferase regulatory chain (153 aa).

Residues C109, C114, C138, and C141 each coordinate Zn(2+).

It belongs to the PyrI family. In terms of assembly, contains catalytic and regulatory chains. Zn(2+) is required as a cofactor.

Its function is as follows. Involved in allosteric regulation of aspartate carbamoyltransferase. The protein is Aspartate carbamoyltransferase regulatory chain of Wigglesworthia glossinidia brevipalpis.